Consider the following 143-residue polypeptide: Transcription antitermination protein NusB (143 aa).

It belongs to the NusB family.

Functionally, involved in transcription antitermination. Required for transcription of ribosomal RNA (rRNA) genes. Binds specifically to the boxA antiterminator sequence of the ribosomal RNA (rrn) operons. The protein is Transcription antitermination protein NusB of Desulforamulus reducens (strain ATCC BAA-1160 / DSM 100696 / MI-1) (Desulfotomaculum reducens).